We begin with the raw amino-acid sequence, 404 residues long: F-box protein At3g57590 (404 aa).

Residues M1 to R47 enclose the F-box domain.

The chain is F-box protein At3g57590 from Arabidopsis thaliana (Mouse-ear cress).